A 154-amino-acid chain; its full sequence is Snaclec dabocetin subunit alpha (154 aa).

Residues 1-23 (MGRFISVSFGLLVVFLSLSGTGA) form the signal peptide. Intrachain disulfides connect Cys25–Cys36, Cys53–Cys148, and Cys123–Cys140. Residues 32-149 (HEGHCYKVFK…CGDKNPFICK (118 aa)) form the C-type lectin domain.

Belongs to the snaclec family. As to quaternary structure, heterodimer of subunits alpha and beta; disulfide-linked. In terms of tissue distribution, expressed by the venom gland.

The protein resides in the secreted. Functionally, inhibits ristocetin-induced platelet aggregation via binding to platelet glycoprotein Ibalpha (GP1BA). This Daboia siamensis (Eastern Russel's viper) protein is Snaclec dabocetin subunit alpha.